The primary structure comprises 303 residues: Glyceraldehyde-3-phosphate dehydrogenase (303 aa).

NAD(+) is bound by residues 6–7 (RI), aspartate 28, arginine 72, and threonine 114. D-glyceraldehyde 3-phosphate-binding positions include 143–145 (SCT), threonine 174, 203–204 (TG), and arginine 226. Cysteine 144 acts as the Nucleophile in catalysis.

The protein belongs to the glyceraldehyde-3-phosphate dehydrogenase family. In terms of assembly, homotetramer.

The protein localises to the cytoplasm. The enzyme catalyses D-glyceraldehyde 3-phosphate + phosphate + NAD(+) = (2R)-3-phospho-glyceroyl phosphate + NADH + H(+). It functions in the pathway carbohydrate degradation; glycolysis; pyruvate from D-glyceraldehyde 3-phosphate: step 1/5. Its function is as follows. Catalyzes the oxidative phosphorylation of glyceraldehyde 3-phosphate (G3P) to 1,3-bisphosphoglycerate (BPG) using the cofactor NAD. The first reaction step involves the formation of a hemiacetal intermediate between G3P and a cysteine residue, and this hemiacetal intermediate is then oxidized to a thioester, with concomitant reduction of NAD to NADH. The reduced NADH is then exchanged with the second NAD, and the thioester is attacked by a nucleophilic inorganic phosphate to produce BPG. This is Glyceraldehyde-3-phosphate dehydrogenase (gap) from Klebsiella pneumoniae.